The following is a 144-amino-acid chain: NADH dehydrogenase [ubiquinone] 1 alpha subcomplex subunit 13 (144 aa).

Ala-2 is modified (N-acetylalanine). The helical transmembrane segment at 30-51 threads the bilayer; it reads LSGYSMLAIGIGTLIYGHWSIM.

The protein belongs to the complex I NDUFA13 subunit family. As to quaternary structure, complex I is composed of 45 different subunits. Interacts with CARD15, but not with CARD4. Interacts with STAT3, but not with STAT1, STAT2 and STAT5A. Interacts with OLFM4.

The protein localises to the mitochondrion inner membrane. Its subcellular location is the nucleus. Functionally, accessory subunit of the mitochondrial membrane respiratory chain NADH dehydrogenase (Complex I), that is believed not to be involved in catalysis. Complex I functions in the transfer of electrons from NADH to the respiratory chain. The immediate electron acceptor for the enzyme is believed to be ubiquinone. Involved in the interferon/all-trans-retinoic acid (IFN/RA) induced cell death. This apoptotic activity is inhibited by interaction with viral IRF1. Prevents the transactivation of STAT3 target genes. May play a role in CARD15-mediated innate mucosal responses and serve to regulate intestinal epithelial cell responses to microbes. In Pan troglodytes (Chimpanzee), this protein is NADH dehydrogenase [ubiquinone] 1 alpha subcomplex subunit 13 (NDUFA13).